The following is a 509-amino-acid chain: Cytochrome P450 4A10 (509 aa).

2 consecutive transmembrane segments (helical) span residues 15–35 (LSGF…VKAV) and 121–141 (LLAP…WFQH). Glu-320 contributes to the heme binding site. Ser-439 carries the phosphoserine modification. Position 456 (Cys-456) interacts with heme.

Belongs to the cytochrome P450 family. Heme serves as cofactor. Highly expressed in the kidneys of both genders.

The protein localises to the endoplasmic reticulum membrane. It localises to the microsome membrane. The enzyme catalyses an omega-methyl-long-chain fatty acid + reduced [NADPH--hemoprotein reductase] + O2 = an omega-hydroxy-long-chain fatty acid + oxidized [NADPH--hemoprotein reductase] + H2O + H(+). It catalyses the reaction dodecanoate + reduced [NADPH--hemoprotein reductase] + O2 = 12-hydroxydodecanoate + oxidized [NADPH--hemoprotein reductase] + H2O + H(+). The catalysed reaction is dodecanoate + reduced [NADPH--hemoprotein reductase] + O2 = 11-hydroxydodecanoate + oxidized [NADPH--hemoprotein reductase] + H2O + H(+). It carries out the reaction tetradecanoate + reduced [NADPH--hemoprotein reductase] + O2 = 14-hydroxytetradecanoate + oxidized [NADPH--hemoprotein reductase] + H2O + H(+). The enzyme catalyses hexadecanoate + reduced [NADPH--hemoprotein reductase] + O2 = 16-hydroxyhexadecanoate + oxidized [NADPH--hemoprotein reductase] + H2O + H(+). It catalyses the reaction (9Z)-octadecenoate + reduced [NADPH--hemoprotein reductase] + O2 = 18-hydroxy-(9Z)-octadecenoate + oxidized [NADPH--hemoprotein reductase] + H2O + H(+). The catalysed reaction is (9Z,12Z)-octadecadienoate + reduced [NADPH--hemoprotein reductase] + O2 = 18-hydroxy-(9Z,12Z)-octadecadienoate + oxidized [NADPH--hemoprotein reductase] + H2O + H(+). It carries out the reaction (9Z,12Z)-octadecadienoate + reduced [NADPH--hemoprotein reductase] + O2 = 17-hydroxy-(9Z,12Z)-octadecadienoate + oxidized [NADPH--hemoprotein reductase] + H2O + H(+). The enzyme catalyses (5Z,8Z,11Z,14Z)-eicosatetraenoate + reduced [NADPH--hemoprotein reductase] + O2 = 20-hydroxy-(5Z,8Z,11Z,14Z)-eicosatetraenoate + oxidized [NADPH--hemoprotein reductase] + H2O + H(+). It catalyses the reaction 8,9-epoxy-(5Z,11Z,14Z)-eicosatrienoate + reduced [NADPH--hemoprotein reductase] + O2 = 20-hydroxy-8,9-epoxy-(5Z,11Z,14Z)-eicosatrienoate + oxidized [NADPH--hemoprotein reductase] + H2O + H(+). In terms of biological role, a cytochrome P450 monooxygenase involved in the metabolism of fatty acids. Catalyzes predominantly the oxidation of the terminal carbon (omega-oxidation) of long-chain fatty acids. Acts as a major omega-hydroxylase for dodecanoic (lauric) acid in liver. In kidney, may play an important role in omega-hydroxylation of (5Z,8Z,11Z,14Z)-eicosatetraenoic acid (arachidonate) to 20-hydroxyeicosatetraenoic acid (20-HETE), a signaling molecule acting both as vasoconstrictive and natriuretic with overall effect on arterial blood pressure. Also participates in the formation of anti-inflammatory hydroxyepoxyeicosatrienoic acids (HEETs) in kidney by converting 8,9-epoxyeicosatrienoic acid (EET) to 20,8,9-HEET, an activator of PPARA. Displays substantially lower fatty acid omega-1 hydroxylase activity. Mechanistically, uses molecular oxygen inserting one oxygen atom into a substrate, and reducing the second into a water molecule, with two electrons provided by NADPH via cytochrome P450 reductase (CPR; NADPH-ferrihemoprotein reductase). The protein is Cytochrome P450 4A10 of Mus musculus (Mouse).